Reading from the N-terminus, the 74-residue chain is Protein krueppel (74 aa).

4 C2H2-type zinc fingers span residues 1–4 (ERTH), 10–32 (FECQ…MRLH), 38–60 (YRCE…LRVH), and 66–74 (YGCEHCSMK).

The protein belongs to the krueppel C2H2-type zinc-finger protein family.

The protein localises to the nucleus. In terms of biological role, krueppel is a gap class segmentation protein. The protein is Protein krueppel (Kr) of Tribolium castaneum (Red flour beetle).